Reading from the N-terminus, the 128-residue chain is Holin-like protein CidA (128 aa).

The next 4 membrane-spanning stretches (helical) occupy residues 4–24, 27–46, 59–79, and 88–108; these read LLLT…INWV, ALHI…FTLL, GAAW…VGVI, and FGVS…VSTG.

The protein belongs to the CidA/LrgA family. CidA subfamily.

It is found in the cell membrane. In terms of biological role, increases the activity of extracellular murein hydrolases possibly by mediating their export via hole formation. Inhibited by the antiholin-like proteins LrgAB. In an unstressed cell, the LrgAB products probably inhibit the function of the CidA protein. When a cell is stressed by the addition of antibiotics or by other factors in the environment, CidA possibly oligomerizes within the bacterial cell membrane, creating lesions that disrupt the proton motive force, which in turn results in loss of cell viability. These lesions are also hypothesized to regulate the subsequent cell lysis by either allowing the murein hydrolases access to the cell wall substrate and/or regulating their activity by a possible change in the cell wall pH that results from loss of membrane potential. In Bacillus velezensis (strain DSM 23117 / BGSC 10A6 / LMG 26770 / FZB42) (Bacillus amyloliquefaciens subsp. plantarum), this protein is Holin-like protein CidA.